A 352-amino-acid chain; its full sequence is C-C chemokine receptor type 5 (352 aa).

Topologically, residues 1-30 are extracellular; the sequence is MDYQTSTPLYDIDYGMSEPCQKLNVRQIAA. Sulfotyrosine is present on tyrosine 3. Residue serine 6 is glycosylated (O-linked (GalNAc...) serine). 2 positions are modified to sulfotyrosine: tyrosine 10 and tyrosine 14. Disulfide bonds link cysteine 20–cysteine 269 and cysteine 101–cysteine 178. The chain crosses the membrane as a helical span at residues 31–58; sequence RLLPPLYSLVFIFGFVGNMLVVLILINC. Topologically, residues 59 to 68 are cytoplasmic; sequence KKLKSMTDIY. Residues 69–89 traverse the membrane as a helical segment; the sequence is LLNLAISDLLFIITIPFWAHY. Residues 90–102 are Extracellular-facing; sequence AADQWVFGNTMCQ. Residues 103 to 124 form a helical membrane-spanning segment; sequence LFTGFYFIGYFGGIFFIILLTI. The Cytoplasmic segment spans residues 125–141; it reads DRYLAIVHAVFALKART. A helical membrane pass occupies residues 142–166; that stretch reads VTFGAATSVVTWVVAVFASLPGIIF. Residues 167-198 lie on the Extracellular side of the membrane; that stretch reads TKSQKEGSRHTCSPHFPSSQYHFWKNFQTLKI. The helical transmembrane segment at 199-218 threads the bilayer; the sequence is VILGLVLPLLVMIVCYSGII. The Cytoplasmic portion of the chain corresponds to 219–235; it reads KTLLRCRNEKKKHKAVR. A helical membrane pass occupies residues 236–260; the sequence is LIFVIMIVYFLFWAPYNIVLLLSTF. At 261 to 277 the chain is on the extracellular side; it reads QEFFGLNNCSGSNRLDQ. Residues 278–301 form a helical membrane-spanning segment; the sequence is AMQVTETLGMTHCCINPIIYAFVG. The Cytoplasmic segment spans residues 302–352; that stretch reads EKFRNYLLRFFRKYFASRFCKGCPVFQGEAPERVSSVYTRSTGEQEISVGL. Residues cysteine 321 and cysteine 324 are each lipidated (S-palmitoyl cysteine). Phosphoserine; by BARK1 is present on residues serine 336, serine 337, serine 342, and serine 349.

It belongs to the G-protein coupled receptor 1 family. In terms of assembly, interacts with PRAF2. Efficient ligand binding to CCL3/MIP-1alpha and CCL4/MIP-1beta requires sulfation, O-glycosylation and sialic acid modifications. Glycosylation on Ser-6 is required for efficient binding of CCL4. Interacts with GRK2. Interacts with ARRB1 and ARRB2. Interacts with CNIH4. Interacts with S100A4; this interaction stimulates T-lymphocyte chemotaxis. In terms of processing, sulfated on at least 2 of the N-terminal tyrosines. Sulfation is required for efficient binding of the chemokines, CCL3 and CCL4. O-glycosylated, but not N-glycosylated. Ser-6 appears to be the major site. Also sialylated glycans present which contribute to chemokine binding. Ser-17 may also be glycosylated and, if so, with small moieties such as a T-antigen. Post-translationally, palmitoylation in the C-terminal is important for cell surface expression. In terms of processing, phosphorylation on serine residues in the C-terminal is stimulated by binding CC chemokines especially by APO-RANTES.

The protein localises to the cell membrane. In terms of biological role, receptor for a number of inflammatory CC-chemokines including CCL3/MIP-1-alpha, CCL4/MIP-1-beta and RANTES and subsequently transduces a signal by increasing the intracellular calcium ion level. May play a role in the control of granulocytic lineage proliferation or differentiation. Participates in T-lymphocyte migration to the infection site by acting as a chemotactic receptor. This chain is C-C chemokine receptor type 5 (CCR5), found in Bos taurus (Bovine).